A 287-amino-acid chain; its full sequence is Protein HEXIM2 (287 aa).

Disordered regions lie at residues 1-212 (MKDW…RSKE) and 266-287 (RLRQ…QPGS). A Phosphoserine modification is found at S31. Phosphothreonine is present on residues T34 and T48. A phosphoserine mark is found at S53, S55, S73, S78, and S83. Residues 89–105 (ARKKHRRRPSKRKRHWR) are compositionally biased toward basic residues. Basic and acidic residues predominate over residues 115-134 (KQQRDERQSQRASRVREEMF). Residues 142–145 (PYNT) form an interaction with P-TEFb region. 2 stretches are compositionally biased toward basic and acidic residues: residues 181-212 (GQGR…RSKE) and 266-280 (RLRQ…EGGR). The stretch at 208–278 (GRSKEELVRD…QENEMWNREG (71 aa)) forms a coiled coil. An interaction with CCNT1, HEXIM1 and HEXIM2 region spans residues 227–287 (QAEEEMRRLR…GGRRGGQPGS (61 aa)).

This sequence belongs to the HEXIM family. Homooligomer and heterooligomer with HEXIM1; probably dimeric. Core component of the 7SK RNP complex, at least composed of 7SK RNA, LARP7, MEPCE, HEXIM1 (or HEXIM2) and P-TEFb (composed of CDK9 and CCNT1/cyclin-T1). Interacts with CCNT2.

Its subcellular location is the nucleus. In terms of biological role, transcriptional regulator which functions as a general RNA polymerase II transcription inhibitor. Core component of the 7SK RNP complex: in cooperation with 7SK snRNA sequesters P-TEFb in a large inactive 7SK snRNP complex preventing RNA polymerase II phosphorylation and subsequent transcriptional elongation. The protein is Protein HEXIM2 (HEXIM2) of Bos taurus (Bovine).